The chain runs to 292 residues: Cyclin-dependent kinase 5 (292 aa).

The Protein kinase domain occupies 4–286 (YEKLEKIGEG…AEEALQHPYF (283 aa)). ATP-binding positions include 10–18 (IGEGTYGTV) and K33. Y15 carries the phosphotyrosine; by ABL1, EPHA4 and FYN modification. T17 is modified (phosphothreonine). K56 bears the N6-acetyllysine mark. The residue at position 72 (S72) is a Phosphoserine. D126 functions as the Proton acceptor in the catalytic mechanism. S159 bears the Phosphoserine mark.

The protein belongs to the protein kinase superfamily. CMGC Ser/Thr protein kinase family. CDC2/CDKX subfamily. Heterodimer composed of a catalytic subunit CDK5 and a regulatory subunit CDK5R1 (p25) and macromolecular complex composed of at least CDK5, CDK5R1 (p35) and CDK5RAP1 or CDK5RAP2 or CDK5RAP3. Only the heterodimer shows kinase activity. Under neurotoxic stress and neuronal injury conditions, p35 is cleaved by calpain to generate p25 that hyperactivates CDK5, that becomes functionally disabled and often toxic. Found in a trimolecular complex with CABLES1 and ABL1. Interacts with CABLES1 and CABLES2. Interacts with AATK and GSTP1. Binds to HDAC1 when in complex with p25. Interaction with myristoylation p35 promotes CDK5 association with membranes. Both isoforms 1 and 2 interacts with beta-catenin/CTNNB1. Interacts with delta-catenin/CTNND2 and APEX1. Interacts with P53/TP53 in neurons. Interacts with EPHA4; may mediate the activation of NGEF by EPHA4. Interacts with PTK2/FAK1. The complex p35/CDK5 interacts with CLOCK. Interacts with HTR6. Post-translationally, phosphorylation on Tyr-15 by ABL1 and FYN, and on Ser-159 by casein kinase 1 promotes kinase activity. By contrast, phosphorylation at Thr-14 inhibits activity. Phosphorylation at Ser-159 is essential for maximal catalytic activity. In terms of tissue distribution, ubiquitously expressed. Accumulates in cortical neurons (at protein level). As to expression, expressed in the testis, skeletal muscle, colon, bone marrow and ovary.

It is found in the cytoplasm. The protein resides in the nucleus. Its subcellular location is the cell membrane. It localises to the perikaryon. The protein localises to the cell projection. It is found in the lamellipodium. The protein resides in the growth cone. Its subcellular location is the postsynaptic density. It localises to the synapse. The enzyme catalyses L-seryl-[protein] + ATP = O-phospho-L-seryl-[protein] + ADP + H(+). It catalyses the reaction L-threonyl-[protein] + ATP = O-phospho-L-threonyl-[protein] + ADP + H(+). Its activity is regulated as follows. Inhibited by 2-(1-ethyl-2-hydroxyethylamino)-6-benzylamino-9-isopropylpurine (roscovitine), 1-isopropyl-4-aminobenzyl-6-ether-linked benzimidazoles, resveratrol, AT-7519 and olomoucine. Activated by CDK5R1 (p35) and CDK5R2 (p39) during the development of the nervous system; degradation of CDK5R1 (p35) and CDK5R2 (p39) by proteasome result in down regulation of kinase activity, during this process, CDK5 phosphorylates p35 and induces its ubiquitination and subsequent degradation. Kinase activity is mainly determined by the amount of p35 available and subcellular location; reversible association to plasma membrane inhibits activity. Long-term inactivation as well as CDK5R1 (p25)-mediated hyperactivation of CDK5 triggers cell death. The pro-death activity of hyperactivated CDK5 is suppressed by membrane association of CDK5, via myristoylation of p35. Brain-derived neurotrophic factor, glial-derived neurotrophic factor, nerve growth factor (NGF), retinoic acid, laminin and neuregulin promote activity. Neurotoxicity enhances nuclear activity, thus leading to MEF2 phosphorylation and inhibition prior to apoptosis of cortical neurons. Repression by GSTP1 via p25/p35 translocation prevents neurodegeneration. Functionally, proline-directed serine/threonine-protein kinase essential for neuronal cell cycle arrest and differentiation and may be involved in apoptotic cell death in neuronal diseases by triggering abortive cell cycle re-entry. Interacts with D1 and D3-type G1 cyclins. Phosphorylates SRC, NOS3, VIM/vimentin, p35/CDK5R1, MEF2A, SIPA1L1, SH3GLB1, PXN, PAK1, MCAM/MUC18, SEPT5, SYN1, DNM1, AMPH, SYNJ1, CDK16, RAC1, RHOA, CDC42, TONEBP/NFAT5, MAPT/TAU, MAP1B, histone H1, p53/TP53, HDAC1, APEX1, PTK2/FAK1, huntingtin/HTT, ATM, MAP2, NEFH and NEFM. Regulates several neuronal development and physiological processes including neuronal survival, migration and differentiation, axonal and neurite growth, synaptogenesis, oligodendrocyte differentiation, synaptic plasticity and neurotransmission, by phosphorylating key proteins. Negatively regulates the CACNA1B/CAV2.2 -mediated Ca(2+) release probability at hippocampal neuronal soma and synaptic terminals. Activated by interaction with CDK5R1 (p35) and CDK5R2 (p39), especially in postmitotic neurons, and promotes CDK5R1 (p35) expression in an autostimulation loop. Phosphorylates many downstream substrates such as Rho and Ras family small GTPases (e.g. PAK1, RAC1, RHOA, CDC42) or microtubule-binding proteins (e.g. MAPT/TAU, MAP2, MAP1B), and modulates actin dynamics to regulate neurite growth and/or spine morphogenesis. Also phosphorylates exocytosis associated proteins such as MCAM/MUC18, SEPT5, SYN1, and CDK16/PCTAIRE1 as well as endocytosis associated proteins such as DNM1, AMPH and SYNJ1 at synaptic terminals. In the mature central nervous system (CNS), regulates neurotransmitter movements by phosphorylating substrates associated with neurotransmitter release and synapse plasticity; synaptic vesicle exocytosis, vesicles fusion with the presynaptic membrane, and endocytosis. Promotes cell survival by activating anti-apoptotic proteins BCL2 and STAT3, and negatively regulating of JNK3/MAPK10 activity. Phosphorylation of p53/TP53 in response to genotoxic and oxidative stresses enhances its stabilization by preventing ubiquitin ligase-mediated proteasomal degradation, and induces transactivation of p53/TP53 target genes, thus regulating apoptosis. Phosphorylation of p35/CDK5R1 enhances its stabilization by preventing calpain-mediated proteolysis producing p25/CDK5R1 and avoiding ubiquitin ligase-mediated proteasomal degradation. During aberrant cell-cycle activity and DNA damage, p25/CDK5 activity elicits cell-cycle activity and double-strand DNA breaks that precedes neuronal death by deregulating HDAC1. DNA damage triggered phosphorylation of huntingtin/HTT in nuclei of neurons protects neurons against polyglutamine expansion as well as DNA damage mediated toxicity. Phosphorylation of PXN reduces its interaction with PTK2/FAK1 in matrix-cell focal adhesions (MCFA) during oligodendrocytes (OLs) differentiation. Negative regulator of Wnt/beta-catenin signaling pathway. Activator of the GAIT (IFN-gamma-activated inhibitor of translation) pathway, which suppresses expression of a post-transcriptional regulon of proinflammatory genes in myeloid cells; phosphorylates the linker domain of glutamyl-prolyl tRNA synthetase (EPRS) in a IFN-gamma-dependent manner, the initial event in assembly of the GAIT complex. Phosphorylation of SH3GLB1 is required for autophagy induction in starved neurons. Phosphorylation of TONEBP/NFAT5 in response to osmotic stress mediates its rapid nuclear localization. MEF2 is inactivated by phosphorylation in nucleus in response to neurotoxin, thus leading to neuronal apoptosis. APEX1 AP-endodeoxyribonuclease is repressed by phosphorylation, resulting in accumulation of DNA damage and contributing to neuronal death. NOS3 phosphorylation down regulates NOS3-derived nitrite (NO) levels. SRC phosphorylation mediates its ubiquitin-dependent degradation and thus leads to cytoskeletal reorganization. May regulate endothelial cell migration and angiogenesis via the modulation of lamellipodia formation. Involved in dendritic spine morphogenesis by mediating the EFNA1-EPHA4 signaling. The complex p35/CDK5 participates in the regulation of the circadian clock by modulating the function of CLOCK protein: phosphorylates CLOCK at 'Thr-451' and 'Thr-461' and regulates the transcriptional activity of the CLOCK-BMAL1 heterodimer in association with altered stability and subcellular distribution. The protein is Cyclin-dependent kinase 5 of Homo sapiens (Human).